The following is a 120-amino-acid chain: Ribonuclease P protein component (120 aa).

It belongs to the RnpA family. As to quaternary structure, consists of a catalytic RNA component (M1 or rnpB) and a protein subunit.

The catalysed reaction is Endonucleolytic cleavage of RNA, removing 5'-extranucleotides from tRNA precursor.. In terms of biological role, RNaseP catalyzes the removal of the 5'-leader sequence from pre-tRNA to produce the mature 5'-terminus. It can also cleave other RNA substrates such as 4.5S RNA. The protein component plays an auxiliary but essential role in vivo by binding to the 5'-leader sequence and broadening the substrate specificity of the ribozyme. This chain is Ribonuclease P protein component, found in Microcystis aeruginosa (strain NIES-843 / IAM M-2473).